The chain runs to 379 residues: Homoserine O-succinyltransferase (379 aa).

Residues 48 to 357 enclose the AB hydrolase-1 domain; it reads NAVLICHALS…SAHGHDAFLM (310 aa). S154 serves as the catalytic Nucleophile. Residue R224 coordinates substrate. Active-site residues include D319 and H352. Residue D353 participates in substrate binding.

Belongs to the AB hydrolase superfamily. MetX family. As to quaternary structure, homodimer.

It is found in the cytoplasm. The catalysed reaction is L-homoserine + succinyl-CoA = O-succinyl-L-homoserine + CoA. It participates in amino-acid biosynthesis; L-methionine biosynthesis via de novo pathway; O-succinyl-L-homoserine from L-homoserine: step 1/1. Its function is as follows. Transfers a succinyl group from succinyl-CoA to L-homoserine, forming succinyl-L-homoserine. The chain is Homoserine O-succinyltransferase from Neisseria meningitidis serogroup B (strain ATCC BAA-335 / MC58).